The primary structure comprises 247 residues: PF03932 family protein CutC (247 aa).

Belongs to the CutC family.

The protein resides in the cytoplasm. This Enterobacter sp. (strain 638) protein is PF03932 family protein CutC.